A 571-amino-acid chain; its full sequence is Proline--tRNA ligase (571 aa).

This sequence belongs to the class-II aminoacyl-tRNA synthetase family. ProS type 1 subfamily. Homodimer.

The protein resides in the cytoplasm. The catalysed reaction is tRNA(Pro) + L-proline + ATP = L-prolyl-tRNA(Pro) + AMP + diphosphate. Catalyzes the attachment of proline to tRNA(Pro) in a two-step reaction: proline is first activated by ATP to form Pro-AMP and then transferred to the acceptor end of tRNA(Pro). As ProRS can inadvertently accommodate and process non-cognate amino acids such as alanine and cysteine, to avoid such errors it has two additional distinct editing activities against alanine. One activity is designated as 'pretransfer' editing and involves the tRNA(Pro)-independent hydrolysis of activated Ala-AMP. The other activity is designated 'posttransfer' editing and involves deacylation of mischarged Ala-tRNA(Pro). The misacylated Cys-tRNA(Pro) is not edited by ProRS. This Vibrio vulnificus (strain YJ016) protein is Proline--tRNA ligase.